Reading from the N-terminus, the 213-residue chain is Citrate synthase, mitochondrial (213 aa).

His74 is a catalytic residue. An N6-acetyllysine; alternate mark is found at Lys94 and Lys100. An N6-succinyllysine; alternate mark is found at Lys94 and Lys100. His120 is a catalytic residue. An oxaloacetate-binding site is contributed by Arg129. Residue Lys148 is modified to N6-acetyllysine; alternate. Lys148 carries the N6-succinyllysine; alternate modification. The residue at position 155 (Lys155) is an N6-acetyllysine. Lys166 is subject to N6-acetyllysine; alternate. At Lys166 the chain carries N6-succinyllysine; alternate. Lys168 is modified (N6,N6,N6-trimethyllysine). Residue Asp175 is part of the active site. An oxaloacetate-binding site is contributed by Arg201.

This sequence belongs to the citrate synthase family. As to quaternary structure, homodimer. In response to mitochondrial stress, the precursor protein is ubiquitinated by the SIFI complex in the cytoplasm before mitochondrial import, leading to its degradation. Within the SIFI complex, UBR4 initiates ubiquitin chain that are further elongated or branched by KCMF1.

The protein resides in the mitochondrion matrix. It carries out the reaction oxaloacetate + acetyl-CoA + H2O = citrate + CoA + H(+). It participates in carbohydrate metabolism; tricarboxylic acid cycle; isocitrate from oxaloacetate: step 1/2. Key enzyme of the Krebs tricarboxylic acid cycle which catalyzes the synthesis of citrate from acetyl coenzyme A and oxaloacetate. The polypeptide is Citrate synthase, mitochondrial (Mesocricetus auratus (Golden hamster)).